Consider the following 336-residue polypeptide: Casein kinase II subunit alpha (336 aa).

Residues tyrosine 32–phenylalanine 317 form the Protein kinase domain. Residues isoleucine 38–valine 46 and lysine 61 contribute to the ATP site. Residue aspartate 149 is the Proton acceptor of the active site.

Belongs to the protein kinase superfamily. Ser/Thr protein kinase family. CK2 subfamily. Tetramer composed of two alpha chains, one beta chain and one beta' chain.

The enzyme catalyses L-seryl-[protein] + ATP = O-phospho-L-seryl-[protein] + ADP + H(+). It carries out the reaction L-threonyl-[protein] + ATP = O-phospho-L-threonyl-[protein] + ADP + H(+). Its function is as follows. Catalytic subunit of a constitutively active serine/threonine-protein kinase complex that phosphorylates a large number of substrates containing acidic residues C-terminal to the phosphorylated serine or threonine. Phosphorylates the frq clock protein thus regulating the circadian clock. In Neurospora crassa (strain ATCC 24698 / 74-OR23-1A / CBS 708.71 / DSM 1257 / FGSC 987), this protein is Casein kinase II subunit alpha (cka).